Consider the following 1308-residue polypeptide: MLSTMCFLWDTECPLYVYFCFFIIVLIVWQVRQNYQGLKCENRRSCCRRHQKVRQRAKDAASRARRLSREEDEKPCELLSIMKSQSWVPKQGNVRQLLCLDPSCQICEATTLEIRQLLQSKKSQISPALLGLPQRAACLEMPISSESFEWNQDFYSRYSTNSPVVPGNQTLTQLTEELTESTNADGVLLCWTDPLQIGQEFHLADMPMASETLVSPGLEEPVVLMNEEDTVHSNLNYIQQLQDHEALNSQIPFQTLTPQLTVTHPMAVSIVTDAPQPFLSPEVLRLLEIHVKKLMHFQRWGLPRRVEESLKQFMPNPPVYLPPEHNQPVSFILNTSSQDCVHRFEGISPETWYSYMDGQPIQTFWVSEWSSGDQGQRLSCKPIPSPVEKPLLTPDYELLHDLCLSPEGQVDGSQSNLQKKFTQLFCGLPSMHSESLGSTFLCTQGVSKNTLKPPYKEPHFLKVSPPIPLPEAAPPPSSTSPNESLDEPQRAQIGGVPFLTLSECKTLEWHLLQRQLQLQWGLPAVIARPPRVQSHTQYKHKPWNKAKPRETLKFFGPGKPFSALTRELFFIPQHARRLLEFHLQKRLIHLRWGLPQRIQRSINMLLSSTDLQSLPCGGSRLPNVSISQPGKPEAYGSGDTFLPTAGKGTTPMPHLFAKAQEMLKSHDTKCEQIREGKVPACVQSAWKGRIPGDLAAGTLFPNIPQGQPLELQAENNPDLHQEAVSWKPMDLDQEAQAFSGVFIEHCRRPQALSEETIKKLETTLRHKYLAFLSGLQALYCMAPTKATSPTVDQSVITTMPWSVKSPQKPLSQKSPLEALCLSGLEPCTQDDKETSANIAEEFQHGAQGHGRTEKVPPERQPLLNRPYSLDTEIMERVSFYLKRKALDIKLGISLKESVFQEPTATDLESESVQEPLGSPRESTLLQGPPTLCHVPVAPDPDKVCLKQPATAVQVVFQEQNQPSSRAVPHRSARQGSQVHRNMMEAQVHYVQMGTGGEMLNLGEPFSTESQSPGKSKSGYVPTVAGKRKIPGKPKVVGDLGEGDAGLGFSLVSLKTRQDGEQEKRLLHRQLQGSSLQAQTFHLEGACPHSPQESPELQFADPPPEVFMETDSEQDMEDSQSKESIVPEPARTAKAPQPMLSRASQGLPFPRSPTQRKPSQGQPGPGHVPPGHATPASPYTRPSRLPEAGLKNKMKLFFHSIKLKMKSKAHTEPSTVSTPGKVAKTSKENIDRGLPQAKSPTKKTKPEDFRGPKAQFSVVGPCLTPSYILDSKFWPRPRRVGSVSVLGHSYHCPRHCPRLAYANQQRNPP.

Residues 7–27 form a helical membrane-spanning segment; that stretch reads FLWDTECPLYVYFCFFIIVLI. Disordered stretches follow at residues 464–488, 627–648, 844–863, 902–927, 1005–1026, 1084–1190, and 1204–1254; these read SPPIPLPEAAPPPSSTSPNESLDEP, SQPGKPEAYGSGDTFLPTAGKG, HGAQGHGRTEKVPPERQPLL, PTATDLESESVQEPLGSPRESTLLQG, FSTESQSPGKSKSGYVPTVAGK, GACP…AGLK, and MKSK…PKAQ. The segment covering 465 to 478 has biased composition (pro residues); it reads PPIPLPEAAPPPSS. The span at 1107–1117 shows a compositional bias: acidic residues; sequence METDSEQDMED.

It belongs to the SPATA31 family.

The protein resides in the membrane. The chain is Spermatogenesis-associated protein 31F1B from Mus musculus (Mouse).